The following is a 140-amino-acid chain: Histone H2B (140 aa).

Residues 1–10 show a composition bias toward basic and acidic residues; it reads MPPKAAEKKP. The interval 1 to 48 is disordered; sequence MPPKAAEKKPSTGGKAPAGKAPAEKKEAGKKTAAAASGDKKKRGKTRK. K8 and K9 each carry N6-acetyllysine; alternate. Glycyl lysine isopeptide (Lys-Gly) (interchain with G-Cter in SUMO); alternate cross-links involve residues K8 and K9. Positions 11-21 are enriched in low complexity; that stretch reads STGGKAPAGKA. At K15 the chain carries N6-acetyllysine. N6-acetyllysine; alternate is present on K25. K25 participates in a covalent cross-link: Glycyl lysine isopeptide (Lys-Gly) (interchain with G-Cter in SUMO); alternate. A Glycyl lysine isopeptide (Lys-Gly) (interchain with G-Cter in SUMO) cross-link involves residue K26. A Glycyl lysine isopeptide (Lys-Gly) (interchain with G-Cter in ubiquitin) cross-link involves residue K134.

This sequence belongs to the histone H2B family. As to quaternary structure, the nucleosome is a histone octamer containing two molecules each of H2A, H2B, H3 and H4 assembled in one H3-H4 heterotetramer and two H2A-H2B heterodimers. The octamer wraps approximately 147 bp of DNA. Post-translationally, monoubiquitinated by the ubc2-bre1 complex to form H2BK123ub1. H2BK123ub1 gives a specific tag for epigenetic transcriptional activation and is also prerequisite for H3K4me and H3K79me formation. H2BK123ub1 also modulates the formation of double-strand breaks during meiosis and is a prerequisite for DNA-damage checkpoint activation. Acetylated by gcn5 to form H2BK11ac and H2BK16ac. H2BK16ac can also be formed by esa1. Acetylation of N-terminal lysines and particularly formation of H2BK11acK16ac has a positive effect on transcription. In terms of processing, sumoylation to form H2BK6su or H2BK7su, and probably also H2BK16su or H2BK17su, occurs preferentially near the telomeres and represses gene transcription.

It localises to the nucleus. Its subcellular location is the chromosome. Its function is as follows. Core component of nucleosome. Nucleosomes wrap and compact DNA into chromatin, limiting DNA accessibility to the cellular machineries which require DNA as a template. Histones thereby play a central role in transcription regulation, DNA repair, DNA replication and chromosomal stability. DNA accessibility is regulated via a complex set of post-translational modifications of histones, also called histone code, and nucleosome remodeling. The protein is Histone H2B (htb1) of Aspergillus clavatus (strain ATCC 1007 / CBS 513.65 / DSM 816 / NCTC 3887 / NRRL 1 / QM 1276 / 107).